Reading from the N-terminus, the 265-residue chain is DNA repair protein RecO (265 aa).

Belongs to the RecO family.

Its function is as follows. Involved in DNA repair and RecF pathway recombination. In Mycobacterium marinum (strain ATCC BAA-535 / M), this protein is DNA repair protein RecO.